The chain runs to 377 residues: Unsaturated 3S-rhamnoglycuronyl hydrolase (377 aa).

Residues 1 to 25 (MKNQALKILTLCVLVGSAMSLKLYA) form the signal peptide. Catalysis depends on D161, which acts as the Proton donor.

This sequence belongs to the glycosyl hydrolase 105 family.

Its subcellular location is the periplasm. In terms of biological role, unsaturated beta-glucuronyl hydrolase involved in ulvan degradation. Ulvan is the main polysaccharide component of the Ulvales (green seaweed) cell wall. It is composed of disaccharide building blocks comprising 3-sulfated rhamnose (Rha3S) linked to D-glucuronic acid (GlcA), L-iduronic acid (IduA), or D-xylose (Xyl). Unsaturated 3S-rhamnoglycuronyl hydrolase works together with ulvan lyases to fully degrade the ulvan polymer, catalyzing specifically the cleavage of the unsaturated 4-deoxy-L-threo-hex-4-enopyranosiduronic acid (deltaUA) of deltaUA-Rha3S disaccharides and deltaUA-Rha3S-Xyl-Rha3S tetrasaccharides, the end products of the ulvan lyase reaction. Also hydrolases deltaUA-Rha3S-IduA-Rha3S and deltaUA-Rha3S-GlcA-Rha3S tetrasaccharidestetrasaccharides. Prefers tetrasaccharides over disaccharides and prefers an uronic residue at subsite +2. This is Unsaturated 3S-rhamnoglycuronyl hydrolase from Formosa agariphila (strain DSM 15362 / KCTC 12365 / LMG 23005 / KMM 3901 / M-2Alg 35-1).